Here is a 395-residue protein sequence, read N- to C-terminus: Subtilisin-like protease 9 (395 aa).

The signal sequence occupies residues 1 to 20 (MGFFRTLFSFSIFALSLADT). A propeptide spanning residues 21 to 120 (SKFIGLDDVD…ADRVVKMAAL (100 aa)) is cleaved from the precursor. One can recognise an Inhibitor I9 domain in the interval 36 to 117 (SYIVVMKGAV…YVEADRVVKM (82 aa)). The region spanning 128–395 (SWGLGRISHK…RRLLYNGSGA (268 aa)) is the Peptidase S8 domain. Active-site charge relay system residues include D160 and H191. N-linked (GlcNAc...) asparagine glycosylation is present at N252. The Charge relay system role is filled by S341. A glycan (N-linked (GlcNAc...) asparagine) is linked at N391.

It belongs to the peptidase S8 family.

It is found in the secreted. Functionally, secreted subtilisin-like serine protease with keratinolytic activity that contributes to pathogenicity. The sequence is that of Subtilisin-like protease 9 (SUB9) from Arthroderma otae (strain ATCC MYA-4605 / CBS 113480) (Microsporum canis).